A 275-amino-acid chain; its full sequence is Large ribosomal subunit protein uL2c (275 aa).

A disordered region spans residues 219–267; that stretch reads TVRGSVMNPCDHPHGGGEGRTPIGRTRPLTPWGKPALGKKTRKTKKLSS. Residues 255 to 264 are compositionally biased toward basic residues; that stretch reads LGKKTRKTKK.

The protein belongs to the universal ribosomal protein uL2 family. In terms of assembly, part of the 50S ribosomal subunit.

It localises to the plastid. The protein localises to the chloroplast. The polypeptide is Large ribosomal subunit protein uL2c (rpl2) (Thalassiosira pseudonana (Marine diatom)).